A 913-amino-acid polypeptide reads, in one-letter code: MEGPEIKAVEAVIDNGSFGKRTLRFETGRLAQQADGAVAAYLDDDSMILSTTTAGSSPKENYDFFPLTVDVEEKMYAAGKIPGSFFRREGRPSSEAILACRIIDRPLRPLFPHTLRNEVQVVETVLAVNPDDAYDVIALNAASASTMISGLPFEGPVSGVRLALIDGQWVAFPRWSERERAVFEIVVAGRVIENGDVAIAMIEAGAGKNAWHLIYDEGQTKPDEEVVAGGLEAAKPFIKVICEAQDELKKIAAKETKEFQLFPEYTDELYARIDEIAHKDLDEALSIAEKLPRQDRIHEIKEHVREVLADEFTDMDDAEKDKELGNAFKELQRQIVRRRILTEDYRIDGRGLRDIRTLSAEVDIVPRVHGSALFQRGETQILGVTTLNMLKMEQQIDALSGPQSKRYMHNYEMPPYSTGETGRVGSPKRREIGHGALAEKALVPVLPSREEFPYAIRQVSEAIGSNGSTSMGSVCASTLSLLAAGVPLKAPVAGIAMGLVSGDVDGKHIFKTLTDILGAEDAFGDMDFKVAGTSEFITALQLDTKLDGIPADILAAALQQAKEARATILEVINECIDGPAEMSEFAPRIITTSVPVEKIGEVIGPKGKMINQIQEDTGAEIAIEDDGTVFISSEGGEAAEKAKAIIDQIANPHVPEAGETYNGKVVKTTSFGAFVNLTPGTDGLLHISQIRNLANGERIDAVEDVLKEGDTVEVIVQGVDDRGKISLAIPGFEDQENNARPSRGDRDDRRGGRGRGDRDDRRGGRGRRSERDDRDFDDRDDRPRRRRSDDFEDDYDDRPRRRRSDDRDFDRDDRDDDRPRRRRSADRDFDDRDDRDARDSRDDDRPRRRRSSDRDDRGDRDDRRGGSRGRGRGSDRNPRYATDDNYDDYRADREERTERPRRRVRRDFDPFED.

Residues 407 to 427 are disordered; the sequence is YMHNYEMPPYSTGETGRVGSP. Mg(2+) is bound by residues Asp-521 and Asp-527. Residues 587 to 646 enclose the KH domain; sequence PRIITTSVPVEKIGEVIGPKGKMINQIQEDTGAEIAIEDDGTVFISSEGGEAAEKAKAII. The region spanning 658–730 is the S1 motif domain; the sequence is GETYNGKVVK…DRGKISLAIP (73 aa). Residues 727-913 are disordered; the sequence is LAIPGFEDQE…VRRDFDPFED (187 aa). Composition is skewed to basic and acidic residues over residues 742-789, 797-865, and 872-898; these read SRGD…RRSD, DRPR…DRRG, and RGSD…ERTE.

The protein belongs to the polyribonucleotide nucleotidyltransferase family. Mg(2+) is required as a cofactor.

The protein resides in the cytoplasm. It catalyses the reaction RNA(n+1) + phosphate = RNA(n) + a ribonucleoside 5'-diphosphate. Its function is as follows. Involved in mRNA degradation. Catalyzes the phosphorolysis of single-stranded polyribonucleotides processively in the 3'- to 5'-direction. This chain is Polyribonucleotide nucleotidyltransferase, found in Bifidobacterium longum (strain DJO10A).